Reading from the N-terminus, the 570-residue chain is MFS-type transporter ptmT (570 aa).

Residues Met-1–Thr-11 show a composition bias toward polar residues. The disordered stretch occupies residues Met-1–Gln-34. Helical transmembrane passes span Gly-50–Leu-70, Trp-94–Tyr-114, Trp-121–Pro-141, Ala-151–Ile-171, Ala-182–Phe-202, Trp-210–Met-230, Gly-247–Leu-267, Asn-278–Ile-298, Ile-323–Phe-343, Ile-356–Ile-376, Val-379–Leu-399, Ile-413–Val-433, Val-445–Ala-465, and Val-517–Ile-537. Asn-541 carries N-linked (GlcNAc...) asparagine glycosylation. The disordered stretch occupies residues Pro-550–Thr-570. Residues Gly-561 to Thr-570 are compositionally biased toward basic and acidic residues.

This sequence belongs to the major facilitator superfamily. TCR/Tet family.

The protein localises to the cell membrane. In terms of biological role, MFS-type transporter; part of the gene cluster that mediates the biosynthesis of the indole diterpenes penitrems. May be involved in the efflux of penitrems. This chain is MFS-type transporter ptmT, found in Penicillium ochrochloron.